Reading from the N-terminus, the 153-residue chain is Ribonuclease K6 (153 aa).

The N-terminal stretch at 1–27 (MVVDLPRYLPLLLLLELWEPMYLLCSQ) is a signal peptide. His-41 serves as the catalytic Proton acceptor. Intrachain disulfides connect Cys-49/Cys-107, Cys-63/Cys-117, Cys-81/Cys-132, and Cys-88/Cys-95. Residue Asn-58 is glycosylated (N-linked (GlcNAc...) asparagine). Substrate is bound at residue 64–68 (KQINT). N-linked (GlcNAc...) asparagine glycosylation occurs at Asn-85. A substrate-binding site is contributed by Lys-89. The Proton donor role is filled by His-148.

The protein belongs to the pancreatic ribonuclease family. In terms of assembly, interacts (via N-terminus) with bacterial lipopolysaccharide (LPS). As to expression, highly expressed in spleen (at protein level). Has little or no expression in healthy kidneys (at protein level). Detected at high levels in infected kidneys (at protein level). Expressed at low levels in bladder. Also detected in skeletal muscle, heart and bone marrow.

Its subcellular location is the secreted. The protein resides in the lysosome. It is found in the cytoplasmic granule. In terms of biological role, ribonuclease which shows a preference for the pyrimidines uridine and cytosine. Has potent antibacterial activity against a range of Gram-positive and Gram-negative bacteria, including P.aeruginosa, A.baumanii, M.luteus, S.aureus, E.faecalis, E.faecium, S.saprophyticus and E.coli. Causes loss of bacterial membrane integrity, and also promotes agglutination of Gram-negative bacteria. Probably contributes to urinary tract sterility. Bactericidal activity is independent of RNase activity. This is Ribonuclease K6 (Rnase6) from Mus musculus (Mouse).